Consider the following 279-residue polypeptide: MYDLTGKHVCYVADCGGIALETSKVLMTKNIAKLAILQSVENQPAIARLQSIKHSTQIFFWTFDVTMARQEMKKYFDEVMVQMDYIDVLINGATLCDERNIDATINTNLTGMMNTVATVLPYMDRKMGGSGGLIVNVTSVIGLDPSPVFCAYSASKFGVIGFTRSLADPLYYTQNGVAVMAVCCGPTKVFVDRELNAFLEYGQTFADRLRRAPCQSTAVCGQNIVTAIERSENGQIWIADKGGLELLTLHWYWHMADQFLSYMQSTDDENQEQFVSGQR.

NAD(+) is bound at residue 11–34; the sequence is YVADCGGIALETSKVLMTKNIAKL. Serine 139 lines the substrate pocket. Residue tyrosine 152 is the Proton acceptor of the active site.

It belongs to the short-chain dehydrogenases/reductases (SDR) family.

The protein is Alcohol dehydrogenase-related 31 kDa protein (Adhr) of Drosophila subobscura (Fruit fly).